The chain runs to 209 residues: MEVKVLNINGKETGRKVQLSDSVFAIEPNKHAVYLDVKQYLANQRQGTHKAKERAEVAGSTRKIKKQKGTGTARAGSAKNPLFKGGGRVFGPRPRSYSFKLNKTVKRLARRSAFSIKAQEANIIVVEDFVFEAPNTKNFINVLKALGLEDKKSLFVLGDSNKNVYLSSRNLKATNVLTNSELSTYAILNANNLVLLEGSLEGIEENLSK.

Residues 45 to 78 (RQGTHKAKERAEVAGSTRKIKKQKGTGTARAGSA) form a disordered region.

This sequence belongs to the universal ribosomal protein uL4 family. Part of the 50S ribosomal subunit.

Functionally, one of the primary rRNA binding proteins, this protein initially binds near the 5'-end of the 23S rRNA. It is important during the early stages of 50S assembly. It makes multiple contacts with different domains of the 23S rRNA in the assembled 50S subunit and ribosome. Forms part of the polypeptide exit tunnel. This is Large ribosomal subunit protein uL4 from Flavobacterium psychrophilum (strain ATCC 49511 / DSM 21280 / CIP 103535 / JIP02/86).